A 280-amino-acid chain; its full sequence is 4-diphosphocytidyl-2-C-methyl-D-erythritol kinase (280 aa).

Residue Lys8 is part of the active site. 91-101 contributes to the ATP binding site; the sequence is PVSAGLAGGST. Residue Asp133 is part of the active site.

Belongs to the GHMP kinase family. IspE subfamily.

The enzyme catalyses 4-CDP-2-C-methyl-D-erythritol + ATP = 4-CDP-2-C-methyl-D-erythritol 2-phosphate + ADP + H(+). Its pathway is isoprenoid biosynthesis; isopentenyl diphosphate biosynthesis via DXP pathway; isopentenyl diphosphate from 1-deoxy-D-xylulose 5-phosphate: step 3/6. In terms of biological role, catalyzes the phosphorylation of the position 2 hydroxy group of 4-diphosphocytidyl-2C-methyl-D-erythritol. The sequence is that of 4-diphosphocytidyl-2-C-methyl-D-erythritol kinase from Clostridium botulinum (strain Eklund 17B / Type B).